A 236-amino-acid chain; its full sequence is Small ribosomal subunit protein uS2c (236 aa).

This sequence belongs to the universal ribosomal protein uS2 family.

Its subcellular location is the plastid. The protein localises to the chloroplast. The chain is Small ribosomal subunit protein uS2c (rps2) from Crucihimalaya wallichii (Rock-cress).